Here is a 478-residue protein sequence, read N- to C-terminus: MNRDSFYPAIACFPLLLMLAGCAPMHETRQALSQQTPAAQVDTALPTALKNGWPDSQWWLEYHDNQLTSLINNALQNAPDMQVAEQRIQLAEAQAKAVATQDGPQIDFSADMERQKMSAEGLMGPFALNDPAAGTTGPWYTNGTFGLTAGWHLDIWGKNRAEVTARLGTVKARAAEREQTRQLLAGSVARLYWEWQTQAALNTVLQQIEKEQNTIIATDRQLYQNGITSSVEGVETDINASKTRQQLNDVAGKMKIIEARLIALTNHQTKSLTLKPVALPKVASQLPDELGYSLLARRADLQAAHWYVESSLSTIDAAKAAFYPDINLMAFLQQDALHLSDLFRHSAQQMGVTAGLTLPIFDSGRLNANLDIAKAESNLSIASYNKAVVEAVNDVARAASQVQTLAEKNQHQAQIERDALRVVGLAQARFNAGIIAGSRVSEARIPALRERANGLLLQGQWLDASIQLTGALGGGYKR.

The first 21 residues, 1 to 21 (MNRDSFYPAIACFPLLLMLAG), serve as a signal peptide directing secretion. Residue C22 is the site of N-palmitoyl cysteine attachment. A lipid anchor (S-diacylglycerol cysteine) is attached at C22.

The protein belongs to the outer membrane factor (OMF) (TC 1.B.17) family.

It localises to the cell outer membrane. Its function is as follows. Could be involved in resistance to puromycin, acriflavine and tetraphenylarsonium chloride. The sequence is that of Multidrug resistance outer membrane protein MdtQ (mdtQ) from Escherichia coli O157:H7.